A 208-amino-acid chain; its full sequence is V-type ATP synthase subunit D (208 aa).

Belongs to the V-ATPase D subunit family.

Functionally, produces ATP from ADP in the presence of a proton gradient across the membrane. The protein is V-type ATP synthase subunit D of Streptococcus pyogenes serotype M1.